Here is an 83-residue protein sequence, read N- to C-terminus: Transmembrane protein EP84R (83 aa).

2 helical membrane-spanning segments follow: residues valine 31 to leucine 51 and alanine 59 to tyrosine 79.

Belongs to the asfivirus EP84R family.

The protein resides in the virion membrane. The polypeptide is Transmembrane protein EP84R (Ornithodoros (relapsing fever ticks)).